The sequence spans 573 residues: Zinc finger protein 10 (573 aa).

Positions 14-85 (VTFKDVFVDF…EREIHQETHP (72 aa)) constitute a KRAB domain. The C2H2-type 1; atypical zinc-finger motif lies at 206 to 232 (DSCASNSNECGQTFCQNIHLIQFARTH). C2H2-type zinc fingers lie at residues 265–287 (YECK…QLIH), 293–315 (YECK…QKTH), 321–343 (YECK…QRTH), 349–371 (YTCN…QRTH), 377–399 (YECP…QRTH), 405–427 (YECN…HRIH), 433–455 (FECK…QRTH), 461–483 (YECH…QRIH), and 489–511 (YECC…QRIH). The segment at 517–539 (YKCNQCGIIFSQNSPFIVHQIAH) adopts a C2H2-type 11; atypical zinc-finger fold.

Belongs to the krueppel C2H2-type zinc-finger protein family. In terms of assembly, interacts (via the KRAB domain) with TRIM28 (via the RBCC domain).

The protein localises to the nucleus. In terms of biological role, may be involved in transcriptional regulation. The sequence is that of Zinc finger protein 10 (ZNF10) from Homo sapiens (Human).